A 194-amino-acid polypeptide reads, in one-letter code: MSTVTFVTGNANKLKEVIAILSGSQSEGGESKVGNFTIVNKSLDLDELQGSIEEVTIHKAKSAAEILGGPVLVEDTCLGFTAFNDLPGPYIKWFVKSVGLQGLVDMLYKFEDKSAKAICTFGYCEGPGKPVQLFQGITKGSIVESRGPTNFGWDSIFQPDGFDKTYAELDKEIKNSISHRFRALDKLRDFLVSQ.

Threonine 8–lysine 13 is an ITP binding site. A Mg(2+)-binding site is contributed by glutamate 47. ITP contacts are provided by residues lysine 59, aspartate 75–threonine 76, lysine 92, phenylalanine 151–aspartate 154, lysine 174, and histidine 179–arginine 180.

This sequence belongs to the HAM1 NTPase family. As to quaternary structure, homodimer. Mg(2+) is required as a cofactor. Requires Mn(2+) as cofactor.

The protein localises to the cytoplasm. The protein resides in the nucleus. It carries out the reaction ITP + H2O = IMP + diphosphate + H(+). The catalysed reaction is dITP + H2O = dIMP + diphosphate + H(+). It catalyses the reaction XTP + H2O = XMP + diphosphate + H(+). Its function is as follows. Pyrophosphatase that hydrolyzes non-canonical purine nucleotides such as inosine triphosphate (ITP), deoxyinosine triphosphate (dITP) or xanthosine 5'-triphosphate (XTP) to their respective monophosphate derivatives. The enzyme does not distinguish between the deoxy- and ribose forms. Probably excludes non-canonical purines from RNA and DNA precursor pools, thus preventing their incorporation into RNA and DNA and avoiding chromosomal lesions. The chain is Inosine triphosphate pyrophosphatase from Scheffersomyces stipitis (strain ATCC 58785 / CBS 6054 / NBRC 10063 / NRRL Y-11545) (Yeast).